The chain runs to 409 residues: Dihydrolipoyllysine-residue succinyltransferase component of 2-oxoglutarate dehydrogenase complex (409 aa).

Residues 2–77 (AIEILVPDLP…VSKQLLGKIS (76 aa)) enclose the Lipoyl-binding domain. N6-lipoyllysine is present on K43. Polar residues predominate over residues 83–107 (DVSSATLKATNEPTPSDRQNAAIEN). The tract at residues 83–114 (DVSSATLKATNEPTPSDRQNAAIENSHNHNAD) is disordered. The Peripheral subunit-binding (PSBD) domain maps to 114–151 (DQSPVIRRLLAEHDLQADQIQGSGVGGRLTREDIEREI). Active-site residues include H380 and D384.

The protein belongs to the 2-oxoacid dehydrogenase family. As to quaternary structure, forms a 24-polypeptide structural core with octahedral symmetry. Part of the 2-oxoglutarate dehydrogenase (OGDH) complex composed of E1 (2-oxoglutarate dehydrogenase), E2 (dihydrolipoamide succinyltransferase) and E3 (dihydrolipoamide dehydrogenase); the complex contains multiple copies of the three enzymatic components (E1, E2 and E3). (R)-lipoate is required as a cofactor.

The catalysed reaction is N(6)-[(R)-dihydrolipoyl]-L-lysyl-[protein] + succinyl-CoA = N(6)-[(R)-S(8)-succinyldihydrolipoyl]-L-lysyl-[protein] + CoA. Its pathway is amino-acid degradation; L-lysine degradation via saccharopine pathway; glutaryl-CoA from L-lysine: step 6/6. In terms of biological role, E2 component of the 2-oxoglutarate dehydrogenase (OGDH) complex which catalyzes the second step in the conversion of 2-oxoglutarate to succinyl-CoA and CO(2). This chain is Dihydrolipoyllysine-residue succinyltransferase component of 2-oxoglutarate dehydrogenase complex (sucB), found in Haemophilus influenzae (strain ATCC 51907 / DSM 11121 / KW20 / Rd).